The sequence spans 273 residues: Transmembrane epididymal protein 1 (273 aa).

6 helical membrane-spanning segments follow: residues 34–54 (IVTG…GMVL), 72–92 (LTMF…KNVL), 96–116 (CVGL…LLMV), 129–149 (VYSL…AELW), 158–178 (LMET…GFIL), and 195–215 (IMFV…FLLG).

It belongs to the TMEM45 family.

The protein resides in the membrane. In Homo sapiens (Human), this protein is Transmembrane epididymal protein 1 (TEDDM1).